We begin with the raw amino-acid sequence, 678 residues long: DNA ligase (678 aa).

NAD(+) is bound by residues 47 to 51 (DSDYD), 96 to 97 (SL), and Glu-122. Lys-124 (N6-AMP-lysine intermediate) is an active-site residue. The NAD(+) site is built by Arg-145, Glu-182, Lys-300, and Lys-324. Zn(2+) is bound by residues Cys-418, Cys-421, Cys-436, and Cys-442. Residues 602–678 (AYNESFTGKT…ILEDNLKDLL (77 aa)) form the BRCT domain.

It belongs to the NAD-dependent DNA ligase family. LigA subfamily. It depends on Mg(2+) as a cofactor. Requires Mn(2+) as cofactor.

The catalysed reaction is NAD(+) + (deoxyribonucleotide)n-3'-hydroxyl + 5'-phospho-(deoxyribonucleotide)m = (deoxyribonucleotide)n+m + AMP + beta-nicotinamide D-nucleotide.. Its function is as follows. DNA ligase that catalyzes the formation of phosphodiester linkages between 5'-phosphoryl and 3'-hydroxyl groups in double-stranded DNA using NAD as a coenzyme and as the energy source for the reaction. It is essential for DNA replication and repair of damaged DNA. This is DNA ligase from Francisella tularensis subsp. holarctica (strain OSU18).